Consider the following 1182-residue polypeptide: Receptor-type guanylate cyclase gcy-19 (1182 aa).

Positions 1-24 (MEYLLFLLLFAGFLTFLPRFLIYA) are cleaved as a signal peptide. Residues 25–507 (QITSSTTTTT…PQSFVDQYGA (483 aa)) are Extracellular-facing. N-linked (GlcNAc...) asparagine glycosylation is found at Asn-91, Asn-369, Asn-430, and Asn-453. Residues 508–528 (LVFAIGGVLIFAMLFVITCFF) traverse the membrane as a helical segment. The Cytoplasmic portion of the chain corresponds to 529-1182 (YVMRQKRLER…FRRQETLALI (654 aa)). Residues 562 to 849 (RMSKRSLQSG…KGNLMDHVFN (288 aa)) enclose the Protein kinase domain. A Guanylate cyclase domain is found at 907-1037 (TVFFSDVVKF…DTVNTASRME (131 aa)). Residues 1094 to 1164 (VSSNSGYQSD…EAKARDIHNE (71 aa)) are disordered. The segment covering 1142–1152 (SPTLSKRSVSP) has biased composition (low complexity).

It belongs to the adenylyl cyclase class-4/guanylyl cyclase family. Expressed in IL2 sensory neurons.

It localises to the cell membrane. The enzyme catalyses GTP = 3',5'-cyclic GMP + diphosphate. Its function is as follows. Guanylate cyclase involved in the production of the second messenger cGMP. This chain is Receptor-type guanylate cyclase gcy-19, found in Caenorhabditis elegans.